The sequence spans 513 residues: GMP synthase [glutamine-hydrolyzing] (513 aa).

The Glutamine amidotransferase type-1 domain maps to 9 to 198 (LILVLDFGSQ…VRRVCECKGQ (190 aa)). The active-site Nucleophile is the C86. Active-site residues include H172 and E174. The GMPS ATP-PPase domain maps to 199 to 388 (WTMENFIEIE…LGIPEHLVWR (190 aa)). Residue 226-232 (SGGVDSS) participates in ATP binding.

In terms of assembly, homodimer.

The enzyme catalyses XMP + L-glutamine + ATP + H2O = GMP + L-glutamate + AMP + diphosphate + 2 H(+). Its pathway is purine metabolism; GMP biosynthesis; GMP from XMP (L-Gln route): step 1/1. Functionally, catalyzes the synthesis of GMP from XMP. The protein is GMP synthase [glutamine-hydrolyzing] of Staphylococcus aureus (strain MSSA476).